Consider the following 164-residue polypeptide: UPF0114 protein YqhA (164 aa).

3 helical membrane-spanning segments follow: residues 15-35 (LLAP…LKFF), 53-73 (LILV…LVMV), and 136-156 (LMWY…MGYL).

The protein belongs to the UPF0114 family.

The protein resides in the cell membrane. This Salmonella dublin (strain CT_02021853) protein is UPF0114 protein YqhA.